The chain runs to 252 residues: CLAVATA3/ESR (CLE)-related protein 4A-2 (252 aa).

The signal sequence occupies residues 1-21; it reads MAKNAMLCLLILRVVLALAFA. A required for secretion from the host cytoplasm to the host apoplasm region spans residues 21 to 83; the sequence is ATNKKGDEEP…SNQLPNNNWM (63 aa). The N-linked (GlcNAc...) asparagine glycan is linked to Asn32. The segment at 116–252 is disordered; that stretch reads RKTGMHSQRH…APAGPDPIHH (137 aa). Basic and acidic residues-rich tracts occupy residues 125–137, 144–179, 186–200, and 207–242; these read HHEE…EKRV, PIHH…EKRV, PIHH…EKRA, and PTHH…EKRG. Residues 127-135 form an A-1 repeat; that stretch reads EETTLEQEK. The segment at 127–219 is 6 X approximate repeat A; sequence EETTLEQEKR…HEETTLEQEK (93 aa). The stretch at 136 to 147 is one CLE-1 repeat; sequence RVAGAGPDPIHH. The tract at residues 136 to 252 is 6 X approximate repeat CLE; the sequence is RVAGAGPDPI…APAGPDPIHH (117 aa). An A-2 repeat occupies 148–156; the sequence is QDTTLEQEK. The CLE-2 repeat unit spans residues 157-168; it reads RAVPAGPDPKHH. One copy of the A-3 repeat lies at 169 to 177; the sequence is EETTLEQEK. Residues 178 to 189 form a CLE-3 repeat; sequence RVAGAGPDPIHH. One copy of the A-4 repeat lies at 190–198; the sequence is QDTTLEQEK. The CLE-4 repeat unit spans residues 199-210; that stretch reads RAVPAGPDPTHH. The stretch at 211-219 is one A-5 repeat; sequence EETTLEQEK. The CLE-5 repeat unit spans residues 220 to 231; it reads RAVPAGPDPKHH. An A-6 repeat occupies 232–240; the sequence is EETTFEQEK. A CLE-6 repeat occupies 241–252; sequence RGAPAGPDPIHH.

This sequence belongs to the CLV3/ESR signal peptide family. In terms of tissue distribution, highly expressed exclusively within the dorsal esophageal gland cell during syncytium formation in host plants.

The protein resides in the secreted. The protein localises to the host cytoplasm. Its subcellular location is the host extracellular space. It is found in the extracellular space. It localises to the apoplast. In terms of biological role, mimics host plant CLE extracellular signal peptides that regulate cell fate. May play a role in the differentiation or division of feeding cells (syncytia) induced in plant roots during infection. This chain is CLAVATA3/ESR (CLE)-related protein 4A-2 (CLE-4A-2), found in Globodera rostochiensis (Golden nematode worm).